The chain runs to 682 residues: Potassium-transporting ATPase ATP-binding subunit (682 aa).

Helical transmembrane passes span Val-35–Gly-55, Ala-62–Ala-82, Ile-219–Ile-239, and Val-254–Ile-274. Catalysis depends on Asp-307, which acts as the 4-aspartylphosphate intermediate. ATP is bound by residues Asp-344, Glu-348, Phe-377–Ser-384, and Lys-395. Asp-518 and Asp-522 together coordinate Mg(2+). 3 helical membrane-spanning segments follow: residues Phe-588–Met-608, Ala-616–Leu-636, and Ile-656–Leu-676.

Belongs to the cation transport ATPase (P-type) (TC 3.A.3) family. Type IA subfamily. As to quaternary structure, the system is composed of three essential subunits: KdpA, KdpB and KdpC.

It localises to the cell inner membrane. The catalysed reaction is K(+)(out) + ATP + H2O = K(+)(in) + ADP + phosphate + H(+). Its function is as follows. Part of the high-affinity ATP-driven potassium transport (or Kdp) system, which catalyzes the hydrolysis of ATP coupled with the electrogenic transport of potassium into the cytoplasm. This subunit is responsible for energy coupling to the transport system and for the release of the potassium ions to the cytoplasm. The sequence is that of Potassium-transporting ATPase ATP-binding subunit from Klebsiella pneumoniae subsp. pneumoniae (strain ATCC 700721 / MGH 78578).